Here is a 133-residue protein sequence, read N- to C-terminus: Secreted effector protein SteB (133 aa).

The protein localises to the secreted. It is found in the host cytoplasm. Effector proteins function to alter host cell physiology and promote bacterial survival in host tissues. This is Secreted effector protein SteB (steB) from Salmonella typhimurium (strain 14028s / SGSC 2262).